Here is a 563-residue protein sequence, read N- to C-terminus: Inclusion body clearance protein IML2 (563 aa).

Belongs to the IML2 family. As to quaternary structure, interacts with lipid droplet proteins.

The protein resides in the cytoplasm. The protein localises to the nucleus. Functionally, inclusion body (IB) resident protein that interacts strongly with lipid droplet (LD) proteins. Involved in LD-mediated IB clearing after protein folding stress, probably by enabling access to the IBs of an LD-stored soluble sterol derivative that acts as a chaperone in inclusion clearing. This is Inclusion body clearance protein IML2 from Schizosaccharomyces pombe (strain 972 / ATCC 24843) (Fission yeast).